A 116-amino-acid chain; its full sequence is Large ribosomal subunit protein bL20c (116 aa).

This sequence belongs to the bacterial ribosomal protein bL20 family.

Its subcellular location is the plastid. It is found in the chloroplast. Its function is as follows. Binds directly to 23S ribosomal RNA and is necessary for the in vitro assembly process of the 50S ribosomal subunit. It is not involved in the protein synthesizing functions of that subunit. The sequence is that of Large ribosomal subunit protein bL20c from Cryptomeria japonica (Japanese cedar).